The primary structure comprises 629 residues: Pentatricopeptide repeat-containing protein At1g62930, chloroplastic (629 aa).

The N-terminal 41 residues, 1-41 (MTSCVHLGIVASQSKKMSLAKRFAQLRKASPLFSLRGVYFS), are a transit peptide targeting the chloroplast. 15 PPR repeats span residues 79-113 (SIVE…RISY), 114-148 (DLYS…GYEP), 149-183 (DIVT…EYQP), 184-218 (NTVT…GCQP), 219-253 (DLFT…KIEA), 254-288 (DVVI…GIRP), 289-323 (NVVT…KINP), 324-358 (NVVT…SIDP), 359-393 (DIFT…DCFP), 394-428 (NVVT…GLVG), 429-463 (NTVT…GVPP), 464-498 (DIIT…KMEP), 499-533 (DIYT…GVKP), 534-568 (NVII…GTLP), and 569-603 (NSGT…GFVG).

It belongs to the PPR family. P subfamily.

The protein localises to the plastid. Its subcellular location is the chloroplast. This chain is Pentatricopeptide repeat-containing protein At1g62930, chloroplastic, found in Arabidopsis thaliana (Mouse-ear cress).